The primary structure comprises 746 residues: MSLVPQRSAPPPPSSSANRAASSLAFQPASTSNSASPTSSSTSTFANGSSSSTTAYRPQPTINTSVSALQGPRSGLPAQTGLAFSVSSLSNNPPAASPITAPSSALPWSSQNPAASGSTATFPPRPVRSNTAGPDTLHTISSVSASQTVAPVMVQRSHSSIAAHQASPSLNQSSPTLDADGPASLTTQSHFVHPSRDRERSRDGTTTPGSRNTFKSVFGGFVNSMSDVFSAQKKIEISTPYDPVHLTHVGFNSDTGEFTGLPKEWQQLLQESGISRQDQEANPQAVIDIVAFYQDATQSQGGSDVWKKMGAAKGNKAPATPRTDTSSEDGIYRVAPQPVLYEKPRTAPAPPGITHPNRPSEFGSPDLRQPPSNASTSSADTALRPSRSTPAPGAAPPPNAKTTSSSNPPPCKPSPASRAPDAPAAVSAASKNAKGPGSVPRRRETKKSTIKDSEVIAKLQAICTDADPTKLYRSLQKIGQGASGGVFTAYQVGTNVSVAIKQMNLEQQPKKDLIINEILVMKESRHRNIVNFIDSFLFKGDLWVVMEYMEGGSLTDVVTCNIMTEGQIAAVSREVLEGLRHLHQHGVIHRDIKSDNVLLSLQGDIKLTDFGFCAQIGESQAKRTTMVGTPYWMAPEVVTRKEYGPKVDIWSLGIMCIEMVEGEPPYLNENPLRALYLIATNGTPKINNPENLSNTFKDFLTTSLDVDAERRPDALGMLAHPFLKRSESLRTLTPLIKAAREQTRKS.

Disordered regions lie at residues 1-138 (MSLV…DTLH) and 155-212 (QRSH…GSRN). Low complexity-rich tracts occupy residues 15-54 (SSAN…SSTT) and 85-105 (SVSS…PSSA). Composition is skewed to polar residues over residues 106–121 (LPWS…STAT), 128–138 (RSNTAGPDTLH), and 156–176 (RSHS…SSPT). The span at 194-203 (PSRDRERSRD) shows a compositional bias: basic and acidic residues. Residues 237-250 (ISTPYDPVHLTHVG) enclose the CRIB domain. The disordered stretch occupies residues 301-451 (GGSDVWKKMG…RRETKKSTIK (151 aa)). The span at 370-380 (PPSNASTSSAD) shows a compositional bias: polar residues. The span at 414–430 (SPASRAPDAPAAVSAAS) shows a compositional bias: low complexity. The Protein kinase domain occupies 472–723 (YRSLQKIGQG…ALGMLAHPFL (252 aa)). Residues 478–486 (IGQGASGGV) and lysine 501 contribute to the ATP site. Aspartate 591 serves as the catalytic Proton acceptor.

Belongs to the protein kinase superfamily. STE Ser/Thr protein kinase family. STE20 subfamily.

The protein localises to the cytoplasm. The protein resides in the nucleus. The catalysed reaction is L-seryl-[protein] + ATP = O-phospho-L-seryl-[protein] + ADP + H(+). It catalyses the reaction L-threonyl-[protein] + ATP = O-phospho-L-threonyl-[protein] + ADP + H(+). Functionally, MAP4K component of the MAPK pathway required for the mating pheromone response and the regulation of cell polarity and cell cycle. Phosphorylates histone H2B to form H2BS10ph. The sequence is that of Serine/threonine-protein kinase SMU1 (SMU1) from Mycosarcoma maydis (Corn smut fungus).